The sequence spans 132 residues: Pro-MCH 1 (132 aa).

The first 24 residues, 1–24 (MRHSVLSISFAVALFLECYTPSTA), serve as a signal peptide directing secretion. A disulfide bridge connects residues Cys-120 and Cys-129.

The protein belongs to the melanin-concentrating hormone family. Pituitary gland. Produced in neurons of lateral basal hypothalamus which project both to the brain and to the neural lobe of the pituitary gland from where MCH is released.

Plays a role in skin pigmentation by antagonizing the action of melanotropin alpha. Induces melanin concentration within the melanophores. May participate in the control of the hypothalamo-pituitary adrenal gland axis by inhibiting the release of ACTH. The polypeptide is Pro-MCH 1 (mch1) (Oncorhynchus mykiss (Rainbow trout)).